A 490-amino-acid chain; its full sequence is MQRGSVGISTTSTFTLATPLLLESGASLFSVQIAYETYGTLNHDKSNAILVCHALTGDAHAAGHHGDESRPGWWDGVIGPGKAFDTDKYFVICSNVLGGCKGTTGPASQNPDTGKPYGTSFPVVTIRDMVNVQKALIDHLGISQLFAVAGGSMGGMQVLQWMVSYPSMVRKAIAIAATGSSTPQQIAFNEVGRKAITADPAWCGGDYYGKEHPVKGLSLARMVAHITYLSDASMHTKFGRALQDREFRGFDFDTEFQVESYLHHQGTSFTKRFDANSYLYLTKAVDYFDLSVDDSLISGFAPTKATVLIISVTSDWLYPPYQSQEIVSALSANECDVHYCELRSQFGHDAFLIETGQLNYSISRFLDHTLVRDVMNTQVPVISEQSTIAVAARMMITQGVNHLPVLAPDQSLVGIVTSWDIANAVACGYTSLDQIMSSQVITTTGDETIEVAASRMEQHRISALPVIDQAQHVIGLISSDGLSKLIGRGP.

Residues 47-353 (NAILVCHALT…SQFGHDAFLI (307 aa)) enclose the AB hydrolase-1 domain. The Nucleophile role is filled by Ser-152. A substrate-binding site is contributed by Arg-221. Catalysis depends on residues Asp-315 and His-348. Substrate is bound at residue Asp-349. CBS domains are found at residues 375 to 432 (MNTQ…YTSL) and 436 to 490 (MSSQ…GRGP).

It belongs to the AB hydrolase superfamily. MetX family. As to quaternary structure, homodimer.

It is found in the cytoplasm. The catalysed reaction is L-homoserine + acetyl-CoA = O-acetyl-L-homoserine + CoA. It functions in the pathway amino-acid biosynthesis; L-methionine biosynthesis via de novo pathway; O-acetyl-L-homoserine from L-homoserine: step 1/1. Its function is as follows. Transfers an acetyl group from acetyl-CoA to L-homoserine, forming acetyl-L-homoserine. The chain is Homoserine O-acetyltransferase from Methanosphaerula palustris (strain ATCC BAA-1556 / DSM 19958 / E1-9c).